Consider the following 297-residue polypeptide: tRNA dimethylallyltransferase (297 aa).

9 to 16 is a binding site for ATP; it reads GPTASGKS. 11 to 16 provides a ligand contact to substrate; that stretch reads TASGKS. Interaction with substrate tRNA stretches follow at residues 34 to 37 and 155 to 159; these read DSMQ and QRVIR.

Belongs to the IPP transferase family. Monomer. It depends on Mg(2+) as a cofactor.

It carries out the reaction adenosine(37) in tRNA + dimethylallyl diphosphate = N(6)-dimethylallyladenosine(37) in tRNA + diphosphate. In terms of biological role, catalyzes the transfer of a dimethylallyl group onto the adenine at position 37 in tRNAs that read codons beginning with uridine, leading to the formation of N6-(dimethylallyl)adenosine (i(6)A). This Leuconostoc mesenteroides subsp. mesenteroides (strain ATCC 8293 / DSM 20343 / BCRC 11652 / CCM 1803 / JCM 6124 / NCDO 523 / NBRC 100496 / NCIMB 8023 / NCTC 12954 / NRRL B-1118 / 37Y) protein is tRNA dimethylallyltransferase.